Here is a 746-residue protein sequence, read N- to C-terminus: Steroid receptor seven-up, isoform A (746 aa).

The tract at residues 38-191 is disordered; it reads PPHSAWHEPP…HSQSSNSGSQ (154 aa). A compositionally biased stretch (low complexity) spans 56 to 68; sequence AASAGPGTTTGSV. A compositionally biased stretch (polar residues) spans 83–101; sequence QQSAVIKQDLSCPSLNQAG. The segment covering 122–141 has biased composition (gly residues); the sequence is GSAGGHHSGSGSGSGSGVNP. A compositionally biased stretch (polar residues) spans 158–170; sequence MLTSIKGQPTGCG. The span at 171 to 191 shows a compositional bias: low complexity; that stretch reads STTPSSQANSSHSQSSNSGSQ. The nuclear receptor DNA-binding region spans 197-272; the sequence is NIECVVCGDK…MGMRREAVQR (76 aa). 2 consecutive NR C4-type zinc fingers follow at residues 200–220 and 236–260; these read CVVCGDKSSGKHYGQFTCEGC and CRGSRNCPIDQHHRNQCQYCRLKKC. The region spanning 307 to 556 is the NR LBD domain; that stretch reads YLSSYISLLL…PLVPSAGSAF (250 aa). The segment at 579 to 645 is disordered; it reads QATPPSSGGG…APAPVPTSSV (67 aa). Residues 592–605 are compositionally biased toward polar residues; that stretch reads GHNNSSGLGASLPT. The span at 606-645 shows a compositional bias: low complexity; sequence QSQSGSSSRNLTASPLSTSLATAPAPASASAPAPVPTSSV.

The protein belongs to the nuclear hormone receptor family. NR2 subfamily. In terms of tissue distribution, expressed in several embryonic tissues; dorsal vessel, oenocyte and fat body. CNS expression is dynamic and confined to temporally restricted subsections of the NB lineage; expressed in many NB and GMCs, but only a small number of neurons.

It is found in the nucleus. Functionally, receptor that is required in photoreceptors R1, R3, R4 and R6 during eye development; generation of the ganglion mother cell-2 (GMC-2) fate in the nb7-3 lineage, coinciding with the transition in the expression of HB to KR in the neuroblasts (NBs). In Drosophila melanogaster (Fruit fly), this protein is Steroid receptor seven-up, isoform A (svp).